Reading from the N-terminus, the 196-residue chain is Probable GTP-binding protein EngB (196 aa).

The region spanning 22–196 (NLPEIALSGR…GNWIEEKISK (175 aa)) is the EngB-type G domain. Residues 30–37 (GRSNVGKS), 57–61 (GKTQT), 75–78 (DVPG), 142–145 (TKID), and 175–177 (FSS) contribute to the GTP site. Residues S37 and T59 each contribute to the Mg(2+) site.

This sequence belongs to the TRAFAC class TrmE-Era-EngA-EngB-Septin-like GTPase superfamily. EngB GTPase family. Mg(2+) is required as a cofactor.

Functionally, necessary for normal cell division and for the maintenance of normal septation. In Lactobacillus helveticus (strain DPC 4571), this protein is Probable GTP-binding protein EngB.